Reading from the N-terminus, the 554-residue chain is MSATAVHSLWTTASGVTSAAPGNSFTAPKIEYTQLMPVLIIVVAAVLGILVEAFVPRRARYHTQLFLTVVAVAGSFAAIVGLAAGGYGTTDAGIVAMGAIAIDGPTLFLQGTILLVAMVALFTFAERRLDPGSNGNRVDSFAAQAGSVPGGEGEKAAVRAGFTTTEVFPLLLFSVAGLLVFPAANDLLTLFIALEVFSLPLYLLCAVARRKRLMSQEAAVKYFLLGAFSSAFLLFGIALLYGYAGSLSYADIANVVDGSVLEIDPALADTMGNDALLLIGGAMILTGLLFKVGAVPFHMWTPDVYQGAPTPVTGFMAAATKVAAFGALLRLLYVALPGLAWDLRPVMWAVAIVTMLGGAIVAITQTDIKRLLAYSSIAHAGFILAGVIAASPEGISSVLFYLLAYSFVTVGAFAVVTLVRDAGGEATHLSKWAGLGRRSPLVAAVFAVFLLAFAGIPLTSGFSGKFAVFKAAAEGGAGALVVVGVLSSAVAAFFYIRVIVLMFFSEPKADGPTVAVPSPLTMTTIAVGVAVTLVLGLAPQYFLDLASQAGVFVR.

14 helical membrane passes run 35–55, 65–85, 105–125, 161–181, 187–207, 222–242, 275–295, 322–342, 345–365, 371–391, 398–418, 442–462, 476–496, and 525–545; these read LMPVLIIVVAAVLGILVEAFV, LFLTVVAVAGSFAAIVGLAAG, PTLFLQGTILLVAMVALFTFA, GFTTTEVFPLLLFSVAGLLVF, LLTLFIALEVFSLPLYLLCAV, YFLLGAFSSAFLLFGIALLYG, ALLLIGGAMILTGLLFKVGAV, VAAFGALLRLLYVALPGLAWD, PVMWAVAIVTMLGGAIVAITQ, LLAYSSIAHAGFILAGVIAAS, VLFYLLAYSFVTVGAFAVVTL, VAAVFAVFLLAFAGIPLTSGF, GAGALVVVGVLSSAVAAFFYI, and IAVGVAVTLVLGLAPQYFLDL.

It belongs to the complex I subunit 2 family. In terms of assembly, NDH-1 is composed of 14 different subunits. Subunits NuoA, H, J, K, L, M, N constitute the membrane sector of the complex.

The protein localises to the cell membrane. The enzyme catalyses a quinone + NADH + 5 H(+)(in) = a quinol + NAD(+) + 4 H(+)(out). In terms of biological role, NDH-1 shuttles electrons from NADH, via FMN and iron-sulfur (Fe-S) centers, to quinones in the respiratory chain. The immediate electron acceptor for the enzyme in this species is believed to be a menaquinone. Couples the redox reaction to proton translocation (for every two electrons transferred, four hydrogen ions are translocated across the cytoplasmic membrane), and thus conserves the redox energy in a proton gradient. The chain is NADH-quinone oxidoreductase subunit N 3 from Streptomyces griseus subsp. griseus (strain JCM 4626 / CBS 651.72 / NBRC 13350 / KCC S-0626 / ISP 5235).